A 672-amino-acid polypeptide reads, in one-letter code: Transcriptional regulator Kaiso (672 aa).

Residues Met-1–Lys-103 form an interaction with NCOR1 region. Residues Met-1–Glu-136 are self-association. The region spanning Cys-32 to Arg-94 is the BTB domain. Residues Lys-151 and Lys-153 each participate in a glycyl lysine isopeptide (Lys-Gly) (interchain with G-Cter in SUMO2) cross-link. Thr-251 carries the post-translational modification Phosphothreonine. An interaction with CBFA2T3 region spans residues Leu-298–His-573. Positions Lys-325–Ser-354 are disordered. Over residues Glu-328–Thr-341 the composition is skewed to acidic residues. Glycyl lysine isopeptide (Lys-Gly) (interchain with G-Cter in SUMO2) cross-links involve residues Lys-390, Lys-407, Lys-414, Lys-449, Lys-465, Lys-474, and Lys-479. Residues Glu-454–Tyr-672 are interaction with CTNND1. Residues Met-471–His-480 carry the Nuclear localization signal motif. 3 C2H2-type zinc fingers span residues Tyr-494–His-516, Tyr-522–His-544, and Tyr-550–His-573. Residues Asn-514–Met-638 are required for DNA-binding. Glycyl lysine isopeptide (Lys-Gly) (interchain with G-Cter in SUMO2) cross-links involve residues Lys-539, Lys-570, Lys-582, Lys-611, and Lys-618. The segment at Gly-616–Asn-635 is disordered.

In terms of assembly, self-associates. Interacts with CTNND2. Interacts with CTNND1, and this interaction inhibits binding to both methylated and non-methylated DNA. Interacts with NCOR1. Interacts with KPNA2/RCH1, which may mediate nuclear import of this protein. Interacts with CBFA2T3. In terms of tissue distribution, expressed in vascular endothelium.

The protein resides in the nucleus. It is found in the cytoplasm. Functionally, transcriptional regulator with bimodal DNA-binding specificity. Binds to methylated CpG dinucleotides in the consensus sequence 5'-CGCG-3' and also binds to the non-methylated consensus sequence 5'-CTGCNA-3' also known as the consensus kaiso binding site (KBS). Recruits the N-CoR repressor complex to promote histone deacetylation and the formation of repressive chromatin structures in target gene promoters. May contribute to the repression of target genes of the Wnt signaling pathway. May also activate transcription of a subset of target genes by the recruitment of CTNND2. Represses expression of MMP7 in conjunction with transcriptional corepressors CBFA2T3, CBFA2T2 and RUNX1T1. This chain is Transcriptional regulator Kaiso (ZBTB33), found in Homo sapiens (Human).